A 218-amino-acid chain; its full sequence is DNA-directed RNA polymerases IV and V subunit 5B (218 aa).

This sequence belongs to the archaeal Rpo5/eukaryotic RPB5 RNA polymerase subunit family. Component of the RNA polymerase IV and V complexes. Interacts with NRPD1. As to expression, expressed inleaves, flower buds, flowers and siliques.

It is found in the nucleus. DNA-dependent RNA polymerase catalyzes the transcription of DNA into RNA using the four ribonucleoside triphosphates as substrates. Component of RNA polymerases IV and V which mediate short-interfering RNAs (siRNA) accumulation and subsequent RNA-directed DNA methylation-dependent (RdDM) transcriptional gene silencing (TGS) of endogenous repeated sequences, including transposable elements. The polypeptide is DNA-directed RNA polymerases IV and V subunit 5B (NRPD5B) (Arabidopsis thaliana (Mouse-ear cress)).